The following is a 204-amino-acid chain: Urease accessory protein UreE (204 aa).

Residues 172–190 (HGHAHSHDHDHDHDHDHQH) are compositionally biased toward basic and acidic residues. The disordered stretch occupies residues 172–204 (HGHAHSHDHDHDHDHDHQHGPGCTHGHHGHDHH).

Belongs to the UreE family.

The protein resides in the cytoplasm. Involved in urease metallocenter assembly. Binds nickel. Probably functions as a nickel donor during metallocenter assembly. The sequence is that of Urease accessory protein UreE from Burkholderia orbicola (strain AU 1054).